The chain runs to 706 residues: Lethal(3)malignant brain tumor-like protein 2 (706 aa).

The disordered stretch occupies residues 1 to 85 (MEKPRGVEET…GTPRSLDGSG (85 aa)). A Phosphoserine modification is found at S13. The segment covering 15 to 26 (PMEEEEEDDDLE) has biased composition (acidic residues). Low complexity predominate over residues 39–50 (SSAGSESSSYLE). Positions 54-63 (EAEHEDREAG) are enriched in basic and acidic residues. Position 68 is a phosphoserine (S68). Position 77 is a phosphothreonine (T77). The FCS-type zinc-finger motif lies at 82–117 (DGSGSEPAVCEMCGIVGTREAFFSKTKRFCSVSCSR). 4 residues coordinate Zn(2+): C91, C94, C111, and C115. MBT repeat units lie at residues 180–284 (FDWG…LVPP), 292–392 (TDWK…IKLS), 398–501 (MAHH…LTPP), and 509–605 (FSWE…LQPP). S339 carries the phosphoserine modification. A Glycyl lysine isopeptide (Lys-Gly) (interchain with G-Cter in SUMO2) cross-link involves residue K406. A disordered region spans residues 606–669 (VATEPTTPLK…KAPSEPAPDE (64 aa)). Positions 620–635 (TKKKKKQFGKKRKRIP) are enriched in basic residues. Glycyl lysine isopeptide (Lys-Gly) (interchain with G-Cter in SUMO2) cross-links involve residues K648, K660, and K676. Residues 685-706 (ADKALSPELPVPVENIKQETDD) are disordered. S690 is subject to Phosphoserine. Residue K701 forms a Glycyl lysine isopeptide (Lys-Gly) (interchain with G-Cter in SUMO1); alternate linkage. K701 participates in a covalent cross-link: Glycyl lysine isopeptide (Lys-Gly) (interchain with G-Cter in SUMO2); alternate.

Part of the E2F6.com-1 complex in G0 phase composed of E2F6, MGA, MAX, TFDP1, CBX3, BAT8, EUHMTASE1, RING1, RNF2, MBLR, BAT8 and YAF2.

The protein resides in the nucleus. Its function is as follows. Putative Polycomb group (PcG) protein. PcG proteins maintain the transcriptionally repressive state of genes, probably via a modification of chromatin, rendering it heritably changed in its expressibility. Its association with a chromatin-remodeling complex suggests that it may contribute to prevent expression of genes that trigger the cell into mitosis. Binds to monomethylated and dimethylated 'Lys-20' on histone H4. Binds histone H3 peptides that are monomethylated or dimethylated on 'Lys-4', 'Lys-9' or 'Lys-27'. The sequence is that of Lethal(3)malignant brain tumor-like protein 2 (L3MBTL2) from Bos taurus (Bovine).